Here is a 256-residue protein sequence, read N- to C-terminus: 1-(5-phosphoribosyl)-5-[(5-phosphoribosylamino)methylideneamino] imidazole-4-carboxamide isomerase (256 aa).

The active-site Proton acceptor is Asp-9. Asp-130 (proton donor) is an active-site residue.

The protein belongs to the HisA/HisF family.

It is found in the cytoplasm. The catalysed reaction is 1-(5-phospho-beta-D-ribosyl)-5-[(5-phospho-beta-D-ribosylamino)methylideneamino]imidazole-4-carboxamide = 5-[(5-phospho-1-deoxy-D-ribulos-1-ylimino)methylamino]-1-(5-phospho-beta-D-ribosyl)imidazole-4-carboxamide. It functions in the pathway amino-acid biosynthesis; L-histidine biosynthesis; L-histidine from 5-phospho-alpha-D-ribose 1-diphosphate: step 4/9. The sequence is that of 1-(5-phosphoribosyl)-5-[(5-phosphoribosylamino)methylideneamino] imidazole-4-carboxamide isomerase from Prochlorococcus marinus (strain SARG / CCMP1375 / SS120).